Reading from the N-terminus, the 465-residue chain is MKLYNTLTMTKEEFEPLEEGKVKMYVCGPTVYDFIHIGNARPLIVFDTLRRYFEYKGYEVIYIQNFTDVEDKMINRANKEGITVFELAERFIQEYYKDADRLNVRRATKSPRATEEIEDMIALIQRLIDKGYAYVVDGDVYFRTRKFAEYGKLSHKNIEDLMAGARVDPSEKKEDPLDFALWKAKKEGEPAWNSPWGEGRPGWHIECSVMAMKYLGQTIDIHAGGQDLIFPHHENEIAQSEAATGKPFARFWLHNGYVNINNEKMSKSLGNFFTVREIIEKYHPEALRLFMLQAHYRKPLNFSIDLIEQAEVALKRIYTCYENLEFLIQNAASSSENDDKLKAAIEELKAKFIDAMEDDLNTAEATGYLFEMVREINTHANSCSKETLTFAKDILKELCSILGILEQYSAKEEAIPQEILELVEKRNQARKAKNFLEADRIRDELKSLGYIVLDTPQGTKVERIK.

Cys-27 provides a ligand contact to Zn(2+). The short motif at 29–39 (PTVYDFIHIGN) is the 'HIGH' region element. Zn(2+) contacts are provided by Cys-207, His-232, and Glu-236. The 'KMSKS' region signature appears at 264–268 (KMSKS). Lys-267 lines the ATP pocket.

Belongs to the class-I aminoacyl-tRNA synthetase family. As to quaternary structure, monomer. Requires Zn(2+) as cofactor.

The protein localises to the cytoplasm. It catalyses the reaction tRNA(Cys) + L-cysteine + ATP = L-cysteinyl-tRNA(Cys) + AMP + diphosphate. The sequence is that of Cysteine--tRNA ligase from Caldicellulosiruptor saccharolyticus (strain ATCC 43494 / DSM 8903 / Tp8T 6331).